The chain runs to 94 residues: Parvalbumin beta 4 (94 aa).

A1 is modified (N-acetylalanine). 2 EF-hand domains span residues 36-63 and 67-94; these read FFAI…FSAG and LSDA…EFAA. Residues D41, D43, S45, F47, E49, E52, D80, D82, D84, M86, and E91 each contribute to the Ca(2+) site.

Belongs to the parvalbumin family.

Its function is as follows. In muscle, parvalbumin is thought to be involved in relaxation after contraction. It binds two calcium ions. This is Parvalbumin beta 4 from Merluccius bilinearis (Silver hake).